Here is a 202-residue protein sequence, read N- to C-terminus: Transmembrane gamma-carboxyglutamic acid protein 2 (202 aa).

The N-terminal stretch at 1–23 (MRGHPSLLLLYMALTTCLDTSPS) is a signal peptide. Residues 24–49 (EETDQEVFLGPPEAQSFLSSHTRIPR) constitute a propeptide that is removed on maturation. Positions 50–96 (ANHWDLELLTPGNLERECLEERCSWEEAREYFEDNTLTERFWESYIY) constitute a Gla domain. The Extracellular portion of the chain corresponds to 50–109 (ANHWDLELLTPGNLERECLEERCSWEEAREYFEDNTLTERFWESYIYNGKGGRGRVDVAS). A disulfide bond links Cys67 and Cys72. A 4-carboxyglutamate modification is found at Glu70. A helical membrane pass occupies residues 110-130 (LAVGLTGGILLIVLAGLGAFW). The Cytoplasmic portion of the chain corresponds to 131–202 (YLRWRQHRGQ…PPYTSLRRPH (72 aa)). The segment at 143–202 (CPQEAGLISPLSPLNPLGPPTPLPPPPPPPPGLPTYEQALAASGVHDAPPPPYTSLRRPH) is disordered. Over residues 158–175 (PLGPPTPLPPPPPPPPGL) the composition is skewed to pro residues. The LPXY motif; mediates binding to WW domain-containing proteins motif lies at 175 to 178 (LPTY). The short motif at 192–195 (PPPY) is the PPXY motif; mediates binding to WW domain-containing proteins element.

As to quaternary structure, interacts with NEDD4. Interacts (via cytoplasmic domain) with transcriptional coactivator YAP1. Post-translationally, gamma-carboxyglutamate residues are formed by vitamin K dependent carboxylation. These residues are essential for the binding of calcium. In terms of tissue distribution, widely expressed with highest levels in kidney. Also highly expressed in the thyroid.

It localises to the cell membrane. This chain is Transmembrane gamma-carboxyglutamic acid protein 2, found in Homo sapiens (Human).